Reading from the N-terminus, the 253-residue chain is MDLPKNRFKAALRAGQRQIGLWHTFASADVAELMATCGYDWILMDTEHSPVGPAEALAFLRAVAPYPVTGVVRPGWNDAVEIKKLLDAGAQTLLIPYVQTPDEARAAVAAVTYPPSGIRGVAGVTRATRYGAIANYAERANDEICLLVQVETRDALAQIEEIASVDGVDGVFIGPADLAASFGYPGQPSHPEVKAAILDGFAKLKKLGVPGGILSRDDTLLRASAEAGAQFIAVEIDATMIRTAALARRAEWS.

His-48 acts as the Proton acceptor in catalysis. Glu-151 and Asp-177 together coordinate a divalent metal cation.

It belongs to the HpcH/HpaI aldolase family. It depends on a divalent metal cation as a cofactor.

It carries out the reaction D-glyceraldehyde + pyruvate = 2-dehydro-3-deoxy-L-galactonate. Its function is as follows. Aldolase which can catalyze in vitro the aldolisation reaction between hydroxypyruvate (HPA) or pyruvate (PA) and D-glyceraldehyde (D-GA). The condensation of pyruvate and D-glyceraldehyde produces 2-dehydro-3-deoxy-L-galactonate. Has weak activity with hydroxypyruvate and D-glyceraldehyde. This Sagittula stellata (strain ATCC 700073 / DSM 11524 / E-37) protein is Hydroxypyruvate/pyruvate aldolase.